Reading from the N-terminus, the 490-residue chain is MSQHETPLYTGLKKHASRQPVQFHIPGHKKGAGMDPEFRQFIGENALSIDLINIEPLDDLHAPKGIIKQAQDLAAEAFGADHTFFSVQGTSGAIMTMVMAVCGPGDKIIIPRNVHKSIMTAIVFSGAVPIFIHPEIDNELGISHGITLESAKRALTEHPDAKGLLVINPTYFGVAADLKSIVELAHSFDVPVLVDEAHGVHIHFHDELPLSAMQAGADIAATSVHKLGGSLTQSSILNMREGLVSKDRVQSILSMLTTTSTSYLLLASLDVARKRLATEGRQLAEETLKLANQTRDRLNQIEGIYCVGSEILGSKAAYSYDPTKLIISVKSLGLTGHDVEKWLRESFNIEVELSDLYNILCIFTPGDSQNDADRLVEALTEIAQQMSEQDVTHQQTEVLLPEIPLLAMTPRDAFYANTEVIPLKEASGRIIAEFVMVYPPGIPIFIPGEIITEENISYIFKNLDAGLPVQGPEDSTLHMIRVIKEQKAIQ.

Lys226 is modified (N6-(pyridoxal phosphate)lysine).

The protein belongs to the Orn/Lys/Arg decarboxylase class-I family. It depends on pyridoxal 5'-phosphate as a cofactor.

The protein localises to the cytoplasm. The enzyme catalyses L-arginine + H(+) = agmatine + CO2. It functions in the pathway amine and polyamine biosynthesis; agmatine biosynthesis; agmatine from L-arginine: step 1/1. Its function is as follows. Catalyzes the formation of agmatine from arginine. This is Arginine decarboxylase (speA) from Bacillus subtilis (strain 168).